We begin with the raw amino-acid sequence, 295 residues long: uncharacterized protein (295 aa).

An N-terminal signal peptide occupies residues 1–26; that stretch reads MKKYLALAAIVAICALWLTQNSNFEA.

This is an uncharacterized protein from Archaeoglobus fulgidus (strain ATCC 49558 / DSM 4304 / JCM 9628 / NBRC 100126 / VC-16).